The chain runs to 930 residues: uncharacterized protein (930 aa).

Residues 434–441 (IRRGISRK) carry the Nuclear localization signal motif.

Its subcellular location is the nucleus. This is an uncharacterized protein from Chaetomium thermophilum (strain DSM 1495 / CBS 144.50 / IMI 039719) (Thermochaetoides thermophila).